Reading from the N-terminus, the 255-residue chain is Pimeloyl-[acyl-carrier protein] methyl ester esterase (255 aa).

Substrate is bound by residues W18, 78 to 79 (SL), and 139 to 143 (FLALD). The active-site Nucleophile is the S78. Residues D203 and H233 contribute to the active site. H233 contributes to the substrate binding site.

This sequence belongs to the AB hydrolase superfamily. Carboxylesterase BioH family. As to quaternary structure, monomer.

It localises to the cytoplasm. The catalysed reaction is 6-carboxyhexanoyl-[ACP] methyl ester + H2O = 6-carboxyhexanoyl-[ACP] + methanol + H(+). It functions in the pathway cofactor biosynthesis; biotin biosynthesis. The physiological role of BioH is to remove the methyl group introduced by BioC when the pimeloyl moiety is complete. It allows to synthesize pimeloyl-ACP via the fatty acid synthetic pathway through the hydrolysis of the ester bonds of pimeloyl-ACP esters. This Xylella fastidiosa (strain M12) protein is Pimeloyl-[acyl-carrier protein] methyl ester esterase.